The primary structure comprises 179 residues: MASVTIRYANALADVVLSNRLDVTTAVRDLNNIVSMTIESEDLRKVWENPSIAVAQKRAILDGLVGMVGTPRIIRNFVAVLIDHQRVPLLPRIARQFELELNHRMGFADAEVTSVHELSAQDRQMIEQQIAKVVGKSVRARYKTNATLLGGAIIRVGSTVYDGSIKGQLAKIKEQLSAS.

This sequence belongs to the ATPase delta chain family. As to quaternary structure, F-type ATPases have 2 components, F(1) - the catalytic core - and F(0) - the membrane proton channel. F(1) has five subunits: alpha(3), beta(3), gamma(1), delta(1), epsilon(1). F(0) has three main subunits: a(1), b(2) and c(10-14). The alpha and beta chains form an alternating ring which encloses part of the gamma chain. F(1) is attached to F(0) by a central stalk formed by the gamma and epsilon chains, while a peripheral stalk is formed by the delta and b chains.

Its subcellular location is the cell inner membrane. F(1)F(0) ATP synthase produces ATP from ADP in the presence of a proton or sodium gradient. F-type ATPases consist of two structural domains, F(1) containing the extramembraneous catalytic core and F(0) containing the membrane proton channel, linked together by a central stalk and a peripheral stalk. During catalysis, ATP synthesis in the catalytic domain of F(1) is coupled via a rotary mechanism of the central stalk subunits to proton translocation. In terms of biological role, this protein is part of the stalk that links CF(0) to CF(1). It either transmits conformational changes from CF(0) to CF(1) or is implicated in proton conduction. In Koribacter versatilis (strain Ellin345), this protein is ATP synthase subunit delta.